We begin with the raw amino-acid sequence, 541 residues long: Pseudokinase FAM20A (541 aa).

The first 33 residues, 1–33 (MPGLRRDRLLALLLLGALFSADLYFHLWPQVQR), serve as a signal peptide directing secretion. 3 N-linked (GlcNAc...) asparagine glycosylation sites follow: N70, N145, and N287. Cystine bridges form between C314/C330, C319/C323, C378/C452, and C453/C512. N388 carries N-linked (GlcNAc...) asparagine glycosylation. Residue N538 is glycosylated (N-linked (GlcNAc...) asparagine).

The protein belongs to the FAM20 family. Interacts with FAM20C; probably forming a heterotetramer of 2 subunits of FAM20A and 2 subunits of FAM20C. In terms of processing, N-glycosylated. In the mammary gland, expressed at higher levels in lactating mice than in virgin mice. Observed throughout the tissues of the mandibular incisor, including the secretory and maturation stage ameloblasts, the suprabasal layers of the gingival epithelium and the odontoblasts. Weak expression in the enamel matrix.

Its subcellular location is the secreted. It is found in the golgi apparatus. The protein localises to the endoplasmic reticulum. In terms of biological role, pseudokinase that acts as an allosteric activator of the Golgi serine/threonine protein kinase FAM20C and is involved in biomineralization of teeth. Forms a complex with FAM20C and increases the ability of FAM20C to phosphorylate the proteins that form the 'matrix' that guides the deposition of the enamel minerals. This is Pseudokinase FAM20A from Mus musculus (Mouse).